The following is a 429-amino-acid chain: Glutamate-1-semialdehyde 2,1-aminomutase 2 (429 aa).

The residue at position 268 (Lys-268) is an N6-(pyridoxal phosphate)lysine.

Belongs to the class-III pyridoxal-phosphate-dependent aminotransferase family. HemL subfamily. As to quaternary structure, homodimer. Pyridoxal 5'-phosphate is required as a cofactor.

Its subcellular location is the cytoplasm. The enzyme catalyses (S)-4-amino-5-oxopentanoate = 5-aminolevulinate. It participates in porphyrin-containing compound metabolism; protoporphyrin-IX biosynthesis; 5-aminolevulinate from L-glutamyl-tRNA(Glu): step 2/2. This chain is Glutamate-1-semialdehyde 2,1-aminomutase 2, found in Staphylococcus aureus (strain USA300).